The primary structure comprises 555 residues: Glutamine--tRNA ligase (555 aa).

Positions 34–44 (PEPNGYLHIGH) match the 'HIGH' region motif. ATP is bound by residues 35–37 (EPN) and 41–47 (HIGHAKS). Asp67 and Tyr212 together coordinate L-glutamine. Residues Thr231, 261 to 262 (RL), and 269 to 271 (MSK) contribute to the ATP site. The 'KMSKS' region motif lies at 268 to 272 (VMSKR). The interval 317 to 324 (TKQDNTIE) is interaction with tRNA.

Belongs to the class-I aminoacyl-tRNA synthetase family. As to quaternary structure, monomer.

Its subcellular location is the cytoplasm. The enzyme catalyses tRNA(Gln) + L-glutamine + ATP = L-glutaminyl-tRNA(Gln) + AMP + diphosphate. This Salmonella paratyphi B (strain ATCC BAA-1250 / SPB7) protein is Glutamine--tRNA ligase.